The primary structure comprises 37 residues: MKVRPSVRKMCEKCRIIRRHRKVMVICNNPKHKQRQG.

It belongs to the bacterial ribosomal protein bL36 family.

It localises to the plastid. Its subcellular location is the chloroplast. The protein is Large ribosomal subunit protein bL36c (rpl36) of Porphyra purpurea (Red seaweed).